We begin with the raw amino-acid sequence, 301 residues long: Bifunctional protein FolD (301 aa).

Residues 169–171 (GRS), Ser-194, and Ile-235 each bind NADP(+).

Belongs to the tetrahydrofolate dehydrogenase/cyclohydrolase family. In terms of assembly, homodimer.

The enzyme catalyses (6R)-5,10-methylene-5,6,7,8-tetrahydrofolate + NADP(+) = (6R)-5,10-methenyltetrahydrofolate + NADPH. The catalysed reaction is (6R)-5,10-methenyltetrahydrofolate + H2O = (6R)-10-formyltetrahydrofolate + H(+). The protein operates within one-carbon metabolism; tetrahydrofolate interconversion. In terms of biological role, catalyzes the oxidation of 5,10-methylenetetrahydrofolate to 5,10-methenyltetrahydrofolate and then the hydrolysis of 5,10-methenyltetrahydrofolate to 10-formyltetrahydrofolate. This chain is Bifunctional protein FolD, found in Gloeothece citriformis (strain PCC 7424) (Cyanothece sp. (strain PCC 7424)).